The chain runs to 324 residues: Transcription factor MYB74 (324 aa).

2 HTH myb-type domains span residues 10 to 62 and 63 to 117; these read KNGL…TNYL and RPDI…RKRL. 2 consecutive DNA-binding regions (H-T-H motif) follow at residues 38-62 and 90-113; these read WRTL…TNYL and WSAI…NTHI.

Highly expressed in flowers and at lower levels in rosette leaves and cauline leaves. Expressed at low levels in roots, stems and siliques.

It localises to the nucleus. Probable transcription factor that may function in salt stress response. This Arabidopsis thaliana (Mouse-ear cress) protein is Transcription factor MYB74.